The following is a 393-amino-acid chain: Pre-mRNA splicing factor SR-like 1 (393 aa).

A disordered region spans residues Met-173–Arg-393. Residues Gln-249 to Arg-312 show a composition bias toward basic and acidic residues. The Nuclear localization signal signature appears at Ser-301–Asp-308. Over residues His-313–Ser-325 the composition is skewed to basic residues. Composition is skewed to basic and acidic residues over residues Gln-329 to Ser-346 and Lys-356 to Ile-385.

It belongs to the PRP38 family. Phosphorylated. In terms of tissue distribution, mostly expressed in siliques and leaves, also present in seedlings, flowers and stems, and, at low levels, in roots.

The protein localises to the nucleus. In terms of biological role, may be required for pre-mRNA splicing. Confers salt tolerance to LiCl and NaCl. The protein is Pre-mRNA splicing factor SR-like 1 of Arabidopsis thaliana (Mouse-ear cress).